A 171-amino-acid polypeptide reads, in one-letter code: Small ribosomal subunit protein uS13 (171 aa).

Residues 128 to 171 (HERGQKVRGQRTKSTGRTEGTIGVNVEAIKEEQAEDDAADGGEE) are disordered. A compositionally biased stretch (acidic residues) spans 160–171 (QAEDDAADGGEE).

Belongs to the universal ribosomal protein uS13 family. Part of the 30S ribosomal subunit. Forms a loose heterodimer with protein S19. Forms two bridges to the 50S subunit in the 70S ribosome.

Located at the top of the head of the 30S subunit, it contacts several helices of the 16S rRNA. In the 70S ribosome it contacts the 23S rRNA (bridge B1a) and protein L5 of the 50S subunit (bridge B1b), connecting the 2 subunits; these bridges are implicated in subunit movement. The polypeptide is Small ribosomal subunit protein uS13 (Halobacterium salinarum (strain ATCC 700922 / JCM 11081 / NRC-1) (Halobacterium halobium)).